Here is a 361-residue protein sequence, read N- to C-terminus: S-adenosylmethionine:tRNA ribosyltransferase-isomerase (361 aa).

Belongs to the QueA family. As to quaternary structure, monomer.

It localises to the cytoplasm. The enzyme catalyses 7-aminomethyl-7-carbaguanosine(34) in tRNA + S-adenosyl-L-methionine = epoxyqueuosine(34) in tRNA + adenine + L-methionine + 2 H(+). It functions in the pathway tRNA modification; tRNA-queuosine biosynthesis. In terms of biological role, transfers and isomerizes the ribose moiety from AdoMet to the 7-aminomethyl group of 7-deazaguanine (preQ1-tRNA) to give epoxyqueuosine (oQ-tRNA). This is S-adenosylmethionine:tRNA ribosyltransferase-isomerase from Haemophilus ducreyi (strain 35000HP / ATCC 700724).